The sequence spans 917 residues: Bifunctional aspartokinase/homoserine dehydrogenase 2, chloroplastic (917 aa).

The N-terminal 89 residues, 1–89, are a transit peptide targeting the chloroplast; that stretch reads MQGLAVSCQL…EVNTYLPKGD (89 aa). Residues 90-338 are aspartokinase; it reads MWSVHKFGGT…VSEAVILSTL (249 aa). The segment at 339-563 is interface; sequence SYQEAWEMSY…LSKTTLAVGI (225 aa). ACT domains follow at residues 413–488 and 494–571; these read VEGT…VING and AVGL…LIGG. The interval 564–917 is homoserine dehydrogenase; the sequence is IGPGLIGGAL…RLASYLGAPS (354 aa). Residues Ile569 and Thr650 each contribute to the NAD(+) site. Residues Ile569, Thr650, and Lys674 each coordinate NADP(+). NADPH contacts are provided by Ile569, Thr650, and Lys674. Residues Glu701, Val704, Ala706, and Leu708 each coordinate Na(+). The NADP(+) site is built by Gly759 and Glu762. L-homoserine is bound by residues Glu762 and Asp773. Lys777 functions as the Proton donor in the catalytic mechanism. Gly894 is an NAD(+) binding site. Gly894 serves as a coordination point for NADP(+). Gly894 is an NADPH binding site.

In the N-terminal section; belongs to the aspartokinase family. The protein in the C-terminal section; belongs to the homoserine dehydrogenase family. Homo- or heterodimer. The cofactor is a metal cation.

Its subcellular location is the plastid. The protein localises to the chloroplast. The catalysed reaction is L-homoserine + NADP(+) = L-aspartate 4-semialdehyde + NADPH + H(+). The enzyme catalyses L-homoserine + NAD(+) = L-aspartate 4-semialdehyde + NADH + H(+). It carries out the reaction L-aspartate + ATP = 4-phospho-L-aspartate + ADP. Its pathway is amino-acid biosynthesis; L-lysine biosynthesis via DAP pathway; (S)-tetrahydrodipicolinate from L-aspartate: step 1/4. It participates in amino-acid biosynthesis; L-methionine biosynthesis via de novo pathway; L-homoserine from L-aspartate: step 1/3. It functions in the pathway amino-acid biosynthesis; L-methionine biosynthesis via de novo pathway; L-homoserine from L-aspartate: step 3/3. The protein operates within amino-acid biosynthesis; L-threonine biosynthesis; L-threonine from L-aspartate: step 1/5. Its pathway is amino-acid biosynthesis; L-threonine biosynthesis; L-threonine from L-aspartate: step 3/5. Its function is as follows. Bifunctional aspartate kinase and homoserine dehydrogenase that catalyzes the first and the third steps toward the synthesis of lysine, methionine and threonine from aspartate. The protein is Bifunctional aspartokinase/homoserine dehydrogenase 2, chloroplastic (AKHSDH2) of Zea mays (Maize).